The primary structure comprises 574 residues: Sulfate adenylyltransferase (574 aa).

The tract at residues 1-169 is N-terminal; the sequence is MSNPPHGGVL…VEAINKLNHY (169 aa). The catalytic stretch occupies residues 170-394; the sequence is DYVALRYTPA…LRESSRPRST (225 aa). Q197 is a sulfate binding site. ATP contacts are provided by residues 197-200 and 291-294; these read QTRN and GRDH. Residues T198, R199, and N200 contribute to the active site. Position 199 (R199) interacts with sulfate. Position 295 (A295) interacts with sulfate. ATP is bound at residue V333. Positions 395-574 are allosteric regulation domain; adenylyl-sulfate kinase-like; it reads QGFTIFLTGY…LETEGFFDRA (180 aa). 3'-phosphoadenylyl sulfate is bound by residues 434–437, R451, 477–478, and R516; these read DTVR and IA.

In the N-terminal section; belongs to the sulfate adenylyltransferase family. The protein in the C-terminal section; belongs to the APS kinase family. Homohexamer. Dimer of trimers.

Its subcellular location is the cytoplasm. The catalysed reaction is sulfate + ATP + H(+) = adenosine 5'-phosphosulfate + diphosphate. It functions in the pathway sulfur metabolism; hydrogen sulfide biosynthesis; sulfite from sulfate: step 1/3. With respect to regulation, allosterically inhibited by 3'-phosphoadenosine 5'-phosphosulfate (PAPS). In terms of biological role, catalyzes the first intracellular reaction of sulfate assimilation, forming adenosine-5'-phosphosulfate (APS) from inorganic sulfate and ATP. Plays an important role in sulfate activation as a component of the biosynthesis pathway of sulfur-containing amino acids. This Aspergillus clavatus (strain ATCC 1007 / CBS 513.65 / DSM 816 / NCTC 3887 / NRRL 1 / QM 1276 / 107) protein is Sulfate adenylyltransferase.